Consider the following 98-residue polypeptide: uncharacterized protein (98 aa).

The segment covering 1–10 (MARRRKPLHR) has biased composition (basic residues). Residues 1-21 (MARRRKPLHRQRPEPPSWALR) are disordered.

This is an uncharacterized protein from Mycobacterium bovis (strain ATCC BAA-935 / AF2122/97).